Consider the following 616-residue polypeptide: Protein translocase subunit SecD (616 aa).

The next 6 membrane-spanning stretches (helical) occupy residues 11–31 (LMVIFIVAIGILYSLPNIYGE), 453–473 (QGINASLWGLVAVIAFMLFYY), 475–495 (MFGVIASFALVINIVLLVGLM), 497–517 (ILPGATLSMPGIAGIVLTLGM), 547–569 (YNGAFTSIFDANLTTILTAIILY), and 585–605 (LGVAISMFTAITGTRALVNAL).

The protein belongs to the SecD/SecF family. SecD subfamily. In terms of assembly, forms a complex with SecF. Part of the essential Sec protein translocation apparatus which comprises SecA, SecYEG and auxiliary proteins SecDF-YajC and YidC.

It is found in the cell inner membrane. Its function is as follows. Part of the Sec protein translocase complex. Interacts with the SecYEG preprotein conducting channel. SecDF uses the proton motive force (PMF) to complete protein translocation after the ATP-dependent function of SecA. This chain is Protein translocase subunit SecD, found in Haemophilus influenzae (strain ATCC 51907 / DSM 11121 / KW20 / Rd).